We begin with the raw amino-acid sequence, 594 residues long: Probable acyl-CoA dehydrogenase (594 aa).

The Proton acceptor role is filled by glutamate 405.

It belongs to the acyl-CoA dehydrogenase family. It depends on FAD as a cofactor.

The catalysed reaction is a 2,3-saturated acyl-CoA + A = a 2,3-dehydroacyl-CoA + AH2. It functions in the pathway lipid metabolism; fatty acid beta-oxidation. Its function is as follows. Involved in the degradation of long-chain fatty acids. The sequence is that of Probable acyl-CoA dehydrogenase (fadE) from Bacillus subtilis (strain 168).